We begin with the raw amino-acid sequence, 657 residues long: Translation factor GUF1, mitochondrial (657 aa).

The transit peptide at 1–21 directs the protein to the mitochondrion; sequence MLKTLGLRSLCPSLGGRGFRR. Residues 56–240 form the tr-type G domain; sequence ENYRNFSIVA…TIVDRIPPPT (185 aa). Residues 65–72, 132–136, and 186–189 each bind GTP; these read AHVDHGKS, DTPGH, and NKID.

Belongs to the TRAFAC class translation factor GTPase superfamily. Classic translation factor GTPase family. LepA subfamily.

It is found in the mitochondrion inner membrane. The catalysed reaction is GTP + H2O = GDP + phosphate + H(+). Functionally, promotes mitochondrial protein synthesis. May act as a fidelity factor of the translation reaction, by catalyzing a one-codon backward translocation of tRNAs on improperly translocated ribosomes. Binds to mitochondrial ribosomes in a GTP-dependent manner. The protein is Translation factor GUF1, mitochondrial of Candida glabrata (strain ATCC 2001 / BCRC 20586 / JCM 3761 / NBRC 0622 / NRRL Y-65 / CBS 138) (Yeast).